Consider the following 600-residue polypeptide: Proline--tRNA ligase (600 aa).

Belongs to the class-II aminoacyl-tRNA synthetase family. ProS type 1 subfamily. As to quaternary structure, homodimer.

It is found in the cytoplasm. The enzyme catalyses tRNA(Pro) + L-proline + ATP = L-prolyl-tRNA(Pro) + AMP + diphosphate. Functionally, catalyzes the attachment of proline to tRNA(Pro) in a two-step reaction: proline is first activated by ATP to form Pro-AMP and then transferred to the acceptor end of tRNA(Pro). As ProRS can inadvertently accommodate and process non-cognate amino acids such as alanine and cysteine, to avoid such errors it has two additional distinct editing activities against alanine. One activity is designated as 'pretransfer' editing and involves the tRNA(Pro)-independent hydrolysis of activated Ala-AMP. The other activity is designated 'posttransfer' editing and involves deacylation of mischarged Ala-tRNA(Pro). The misacylated Cys-tRNA(Pro) is not edited by ProRS. In Synechococcus elongatus (strain ATCC 33912 / PCC 7942 / FACHB-805) (Anacystis nidulans R2), this protein is Proline--tRNA ligase.